The primary structure comprises 59 residues: Large ribosomal subunit protein uL30 (59 aa).

It belongs to the universal ribosomal protein uL30 family. In terms of assembly, part of the 50S ribosomal subunit.

The chain is Large ribosomal subunit protein uL30 from Solibacter usitatus (strain Ellin6076).